The chain runs to 494 residues: Probable cytosol aminopeptidase (494 aa).

Residues K260 and D265 each coordinate Mn(2+). K272 is a catalytic residue. Mn(2+) is bound by residues D283, D342, and E344. R346 is a catalytic residue.

The protein belongs to the peptidase M17 family. It depends on Mn(2+) as a cofactor.

It localises to the cytoplasm. The catalysed reaction is Release of an N-terminal amino acid, Xaa-|-Yaa-, in which Xaa is preferably Leu, but may be other amino acids including Pro although not Arg or Lys, and Yaa may be Pro. Amino acid amides and methyl esters are also readily hydrolyzed, but rates on arylamides are exceedingly low.. It carries out the reaction Release of an N-terminal amino acid, preferentially leucine, but not glutamic or aspartic acids.. Functionally, presumably involved in the processing and regular turnover of intracellular proteins. Catalyzes the removal of unsubstituted N-terminal amino acids from various peptides. The sequence is that of Probable cytosol aminopeptidase from Bacillus cereus (strain B4264).